An 85-amino-acid chain; its full sequence is Antitoxin VapB43 (85 aa).

The tract at residues 37–60 (GLNPPKPQAAGRYRVQPSGKGGLR) is disordered.

Its function is as follows. Antitoxin component of a type II toxin-antitoxin (TA) system. This Mycobacterium tuberculosis (strain CDC 1551 / Oshkosh) protein is Antitoxin VapB43 (vapB43).